The sequence spans 3122 residues: Abnormal spindle-like microcephaly-associated protein homolog (3122 aa).

Disordered regions lie at residues methionine 1–proline 26 and lysine 139–phenylalanine 169. Positions proline 10–proline 21 are enriched in basic and acidic residues. The tract at residues serine 289–glutamine 388 is sufficient for interaction with KATNA1:KATNB1. Serine 348, serine 373, and serine 573 each carry phosphoserine. Residues proline 579–glutamate 600 form a disordered region. In terms of domain architecture, Calponin-homology (CH) 1 spans lysine 888–glutamine 1024. Residues valine 1025 to histidine 1045 are a coiled coil. Serine 1071 is subject to Phosphoserine. Residues glycine 1078 to leucine 1229 form the Calponin-homology (CH) 2 domain. IQ domains lie at glutamate 1234–alanine 1263, glutamine 1315–glutamine 1346, glutamine 1410–glutamine 1439, lysine 1504–glutamine 1535, leucine 1550–threonine 1579, threonine 1600–lysine 1629, alanine 1623–lysine 1652, valine 1696–serine 1725, glutamine 1719–glutamine 1750, valine 1769–threonine 1798, glutamine 1792–lysine 1821, threonine 1842–lysine 1871, glutamine 1865–glutamine 1896, leucine 1915–glutamine 1946, glutamine 1938–glutamine 1967, threonine 1988–threonine 2017, cysteine 2011–glutamine 2042, leucine 2061–glutamate 2092, threonine 2134–glutamine 2165, methionine 2157–glutamine 2188, leucine 2207–glutamine 2238, methionine 2230–glutamine 2261, leucine 2279–glutamine 2310, methionine 2302–glutamine 2333, glutamine 2343–glutamine 2374, methionine 2366–glutamine 2397, leucine 2416–glutamine 2447, glutamine 2491–glutamine 2522, lysine 2602–glutamate 2633, arginine 2674–glutamine 2705, leucine 2724–histidine 2755, and isoleucine 2849–serine 2880.

In terms of assembly, interacts with KATNA1 and KATNB1; katanin complex formation KATNA1:KATNB1 is required for the association. In terms of tissue distribution, expressed in fetal brain, peripheral nervous system, liver and spleen. In the adult, expressed exclusively in testis, ovary and spleen.

The protein resides in the cytoplasm. Its subcellular location is the cytoskeleton. It is found in the spindle. The protein localises to the nucleus. Functionally, involved in mitotic spindle regulation and coordination of mitotic processes. The function in regulating microtubule dynamics at spindle poles including spindle orientation, astral microtubule density and poleward microtubule flux seem to depend on its association with the katanin complex formed by KATNA1 and KATNB1. Enhances the microtubule lattice severing activity of KATNA1 by recruiting the katanin complex to microtubules. Can block microtubule minus-end growth and reversely this function can be enhanced by the katanin complex. May have a preferential role in regulating neurogenesis. The polypeptide is Abnormal spindle-like microcephaly-associated protein homolog (Aspm) (Mus musculus (Mouse)).